A 517-amino-acid polypeptide reads, in one-letter code: Crotonobetaine/carnitine--CoA ligase (517 aa).

The protein belongs to the ATP-dependent AMP-binding enzyme family.

The enzyme catalyses 4-(trimethylamino)butanoate + ATP + CoA = 4-(trimethylamino)butanoyl-CoA + AMP + diphosphate. It carries out the reaction crotonobetaine + ATP + CoA = crotonobetainyl-CoA + AMP + diphosphate. It catalyses the reaction (R)-carnitine + ATP + CoA = (R)-carnitinyl-CoA + AMP + diphosphate. It participates in amine and polyamine metabolism; carnitine metabolism. Functionally, catalyzes the transfer of CoA to carnitine, generating the initial carnitinyl-CoA needed for the CaiB reaction cycle. Also has activity toward crotonobetaine and gamma-butyrobetaine. The protein is Crotonobetaine/carnitine--CoA ligase of Salmonella paratyphi C (strain RKS4594).